A 343-amino-acid polypeptide reads, in one-letter code: MGSADERRFEVLRAIVADFVATKEPIGSKTLVERHNLGVSSATVRNDMAVLEAEGYITQPHTSSGRVPTEKGYREFVDRLDDVKPLSAAERRAIQNFLESGVDLDDVLRRAVRLLAQLTRQVAIVQYPTLSSSTVRHLEVIALTPARLLMVVITDSGRVDQRIVELGDVIDDHELSRLREMLGQALVGKKLSAASVAVADLAEQLRSPDGLGDAVGRSATVLLESLVEHSEERLLMGGTANLTRNAADFGGSLRSILEALEEQVVVLRLLAAQQEAGKVTVRIGHETAAEQMVGTSMVTTAYGTSDTVYGGMGVLGPTRMDYPGTIASVAAVAMYIGEVLGAR.

The protein belongs to the HrcA family.

Negative regulator of class I heat shock genes (grpE-dnaK-dnaJ and groELS operons). Prevents heat-shock induction of these operons. The sequence is that of Heat-inducible transcription repressor HrcA from Mycolicibacterium paratuberculosis (strain ATCC BAA-968 / K-10) (Mycobacterium paratuberculosis).